Consider the following 483-residue polypeptide: Probable cytosol aminopeptidase (483 aa).

Mn(2+) is bound by residues Lys-244 and Asp-249. Lys-256 is an active-site residue. Mn(2+) is bound by residues Asp-267, Asp-326, and Glu-328. Arg-330 is an active-site residue.

Belongs to the peptidase M17 family. Mn(2+) serves as cofactor.

It is found in the cytoplasm. It catalyses the reaction Release of an N-terminal amino acid, Xaa-|-Yaa-, in which Xaa is preferably Leu, but may be other amino acids including Pro although not Arg or Lys, and Yaa may be Pro. Amino acid amides and methyl esters are also readily hydrolyzed, but rates on arylamides are exceedingly low.. It carries out the reaction Release of an N-terminal amino acid, preferentially leucine, but not glutamic or aspartic acids.. Its function is as follows. Presumably involved in the processing and regular turnover of intracellular proteins. Catalyzes the removal of unsubstituted N-terminal amino acids from various peptides. This is Probable cytosol aminopeptidase from Campylobacter jejuni subsp. jejuni serotype O:2 (strain ATCC 700819 / NCTC 11168).